The sequence spans 562 residues: Protein wntless (562 aa).

Over 1 to 13 the chain is Cytoplasmic; it reads MSGTILENLSGRK. Residues 14–34 traverse the membrane as a helical segment; the sequence is LSILVTTLLLCQVLCFLLGGL. Residues 35–239 are Lumenal-facing; it reads YAPLPAGHVT…AIHQNGGFTQ (205 aa). N-linked (GlcNAc...) asparagine glycosylation is present at Asn58. Residues 240-260 form a helical membrane-spanning segment; that stretch reads IWLLLKTVLFPFVVGIMIWFW. The Cytoplasmic segment spans residues 261 to 270; it reads RRVHLLQRSP. A helical membrane pass occupies residues 271-291; that stretch reads ALLEYMLIYLGAALTFLNLPL. Topologically, residues 292–311 are lumenal; sequence EYLSLVFEMPYMLLLSDIRQ. A helical transmembrane segment spans residues 312 to 332; the sequence is GIFYAMLLTFWLVFAGEHMLI. Residues 333-344 are Cytoplasmic-facing; that stretch reads QDAPNKSTIRSR. Residues 345-365 form a helical membrane-spanning segment; the sequence is YWKHLSAVVVGCISLFVFDIC. At 366–390 the chain is on the lumenal side; it reads ERGVQLRNPFYSIWAMPLAAKMAMT. Residues 391–411 form a helical membrane-spanning segment; sequence FIVLAGVSAAIYFLFLCYMIW. Over 412 to 441 the chain is Cytoplasmic; sequence KVFRNIGDKRTSLPSMSQARRLHYESLIYR. Residues 442 to 462 traverse the membrane as a helical segment; that stretch reads FKFLMLATIVCAALTVTGFIM. The Lumenal segment spans residues 463 to 482; it reads GQRAEGQWDWNDNVAIQPTS. Residues 483-503 form a helical membrane-spanning segment; it reads AFLTGVYGMWNIYIFALLILY. Over 504–562 the chain is Cytoplasmic; sequence APSHKQWPTMHHSDETTQSNENIVASAASEEIEFSHLPSDSNPSEISSLTSFTRKVAFD. The tract at residues 539-562 is disordered; that stretch reads HLPSDSNPSEISSLTSFTRKVAFD. Positions 541–556 are enriched in polar residues; sequence PSDSNPSEISSLTSFT.

Belongs to the wntless family. Interacts with wg; in the Golgi. Interacts with Vps35, a component of the retromer complex; wls stability is regulated by Vps35.

It localises to the presynaptic cell membrane. Its subcellular location is the postsynaptic cell membrane. The protein resides in the cell membrane. It is found in the endoplasmic reticulum membrane. The protein localises to the endosome membrane. It localises to the golgi apparatus membrane. Its function is as follows. A segment polarity gene required for wingless (wg)-dependent patterning processes, acting in both wg-sending cells and wg-target cells. In non-neuronal cells wls directs wg secretion. The wls traffic loop encompasses the Golgi, the cell surface, an endocytic compartment and a retrograde route leading back to the Golgi, and involves clathrin-mediated endocytosis and the retromer complex (a conserved protein complex consisting of Vps35 and Vps26). In neuronal cells (the larval motorneuron NMJ), the wg signal moves across the synapse via the release of wls-containing exosome-like vesicles. Postsynaptic wls is required for the trafficking of fz2 through the fz2-interacting protein Grip. This Drosophila erecta (Fruit fly) protein is Protein wntless.